Here is a 332-residue protein sequence, read N- to C-terminus: tRNA-dihydrouridine synthase B (332 aa).

FMN is bound by residues 16-18 and Gln-70; that span reads PMA. Cys-100 (proton donor) is an active-site residue. Residues Lys-139, 200–202, and 224–225 contribute to the FMN site; these read NGD and GR.

It belongs to the Dus family. DusB subfamily. FMN serves as cofactor.

It carries out the reaction a 5,6-dihydrouridine in tRNA + NAD(+) = a uridine in tRNA + NADH + H(+). The enzyme catalyses a 5,6-dihydrouridine in tRNA + NADP(+) = a uridine in tRNA + NADPH + H(+). Functionally, catalyzes the synthesis of 5,6-dihydrouridine (D), a modified base found in the D-loop of most tRNAs, via the reduction of the C5-C6 double bond in target uridines. In Xanthomonas campestris pv. campestris (strain ATCC 33913 / DSM 3586 / NCPPB 528 / LMG 568 / P 25), this protein is tRNA-dihydrouridine synthase B.